A 304-amino-acid polypeptide reads, in one-letter code: Acetaldehyde dehydrogenase 4 (304 aa).

Catalysis depends on Cys131, which acts as the Acyl-thioester intermediate. NAD(+)-binding positions include 162 to 170 and Asn273; that span reads SAGPGTRKN.

This sequence belongs to the acetaldehyde dehydrogenase family.

It carries out the reaction acetaldehyde + NAD(+) + CoA = acetyl-CoA + NADH + H(+). This is Acetaldehyde dehydrogenase 4 from Dechloromonas aromatica (strain RCB).